The sequence spans 54 residues: Large ribosomal subunit protein bL33 (54 aa).

It belongs to the bacterial ribosomal protein bL33 family.

The chain is Large ribosomal subunit protein bL33 from Elusimicrobium minutum (strain Pei191).